Reading from the N-terminus, the 678-residue chain is MFQDNPLLAQLKQKIQETLPKKEGTIKASDKGFGFLEVDSKTSYFVPPPYMKKCMHGDKVVAFIRTENEREVAEPSELIEQSLTRFIGRVKLFKGKLNVAPDHPQLKKLSLKAKTKKGLNEADFQEGDWVVAHLVRHPLKGDDGFFVQISHKITDANDKIAPWWVTLAENDLPNSEPAGIDDWQLKDDADLVREDLTALPFVTIDGESTKDMDDALYAQQLPNGDFALTIAIADPTAYITPEDEMDKVARERGFTIYLPGRNIPMLPRDLADELCSLMENQVRPALCCSVTIRKDGVIGDDIRFFAANIKSHARLVYDHVSDWLETGSSEQWQPSEEIAQVVRDLYAFSQARANWRETHAVVFPDRPDYRFELSADNDVVAIHADMRRTANRLVEESMITANICAGKTLQTTFGFGVFNTHAGFKAEKMADVVELMAVNGAPNADAETLATVEGFAALRRWLATQETSYLDNRIRKYQSYSEIGNQPLPHFAMGLDVYATWTSPIRKYGDMINHRLLKAHILGKAPVQTPDETVGEELALHRKHHKIAERNVADWLYARTLADEPAKETRFQAEIFDINRPGMRVRLLENGAMAFIPGALILDNKERIECNGEDGTVLIDKEVVYKLGDVLEIVLTEVNQENRSLVGKPTQVFADLVSETQTSAEQPAEGAENNEPQV.

An RNB domain is found at 193–521 (REDLTALPFV…INHRLLKAHI (329 aa)). The S1 motif domain maps to 568 to 650 (ETRFQAEIFD…ENRSLVGKPT (83 aa)). The disordered stretch occupies residues 659–678 (ETQTSAEQPAEGAENNEPQV).

The protein belongs to the RNR ribonuclease family. RNase II subfamily.

The protein localises to the cytoplasm. It catalyses the reaction Exonucleolytic cleavage in the 3'- to 5'-direction to yield nucleoside 5'-phosphates.. In terms of biological role, involved in mRNA degradation. Hydrolyzes single-stranded polyribonucleotides processively in the 3' to 5' direction. The protein is Exoribonuclease 2 of Vibrio cholerae serotype O1 (strain ATCC 39315 / El Tor Inaba N16961).